We begin with the raw amino-acid sequence, 199 residues long: Nucleoside triphosphate pyrophosphatase (199 aa).

The active-site Proton acceptor is the Asp-72.

It belongs to the Maf family. Requires a divalent metal cation as cofactor.

The protein localises to the cytoplasm. The enzyme catalyses a ribonucleoside 5'-triphosphate + H2O = a ribonucleoside 5'-phosphate + diphosphate + H(+). It catalyses the reaction a 2'-deoxyribonucleoside 5'-triphosphate + H2O = a 2'-deoxyribonucleoside 5'-phosphate + diphosphate + H(+). Its function is as follows. Nucleoside triphosphate pyrophosphatase. May have a dual role in cell division arrest and in preventing the incorporation of modified nucleotides into cellular nucleic acids. In Synechococcus elongatus (strain ATCC 33912 / PCC 7942 / FACHB-805) (Anacystis nidulans R2), this protein is Nucleoside triphosphate pyrophosphatase.